A 272-amino-acid chain; its full sequence is MKIQTNAVNVLERTSAYLRTGVIKETPAWYNVVASIPPVTKFTREPHKINPSTDKKVSELKDPDLESVNRNGLYKTRFNALERKVANKQIYKPPKLVYLEDKIRTLFYKQHPWELARPKIVSENEINTNPDWKNMLQLGQPLDGENVVQRTLYLLKTKEQSNITDAYDQARLEFYRLRMQQELEEQVAAEEAEMFGSVFGPSTIEHGVTKEQQVIEKWKRDAELQSELLSAKKENASKAAGDASAVSSEKQVEDDVVNFDESTDADQEVLHF.

Residues 233–272 (KENASKAAGDASAVSSEKQVEDDVVNFDESTDADQEVLHF) form a disordered region. A compositionally biased stretch (acidic residues) spans 252–272 (VEDDVVNFDESTDADQEVLHF).

The protein belongs to the mitochondrion-specific ribosomal protein mS23 family. In terms of assembly, component of the mitochondrial small ribosomal subunit.

Its subcellular location is the mitochondrion. The chain is Small ribosomal subunit protein mS23 (RSM25) from Candida glabrata (strain ATCC 2001 / BCRC 20586 / JCM 3761 / NBRC 0622 / NRRL Y-65 / CBS 138) (Yeast).